A 502-amino-acid chain; its full sequence is Lipoprotein LipO (502 aa).

The N-terminal stretch at 1-21 (MKIRMRKKWMALPLAAMMIAG) is a signal peptide. Cysteine 22 is lipidated: N-palmitoyl cysteine. Cysteine 22 carries S-diacylglycerol cysteine lipidation.

It localises to the cell membrane. This chain is Lipoprotein LipO (lipO), found in Bacillus subtilis (strain 168).